Reading from the N-terminus, the 390-residue chain is Formate-dependent phosphoribosylglycinamide formyltransferase (390 aa).

N(1)-(5-phospho-beta-D-ribosyl)glycinamide is bound by residues 18 to 19 and glutamate 78; that span reads EL. Residues arginine 110, lysine 151, 156 to 161, 191 to 194, and glutamate 199 each bind ATP; these read SSGKGQ and EEFL. One can recognise an ATP-grasp domain in the interval 115–305; that stretch reads DLASKELNIK…EFELHLRAFL (191 aa). Mg(2+) is bound by residues glutamate 264 and glutamate 276. N(1)-(5-phospho-beta-D-ribosyl)glycinamide-binding positions include aspartate 283, lysine 353, and 360 to 361; that span reads RR.

This sequence belongs to the PurK/PurT family. In terms of assembly, homodimer.

It carries out the reaction N(1)-(5-phospho-beta-D-ribosyl)glycinamide + formate + ATP = N(2)-formyl-N(1)-(5-phospho-beta-D-ribosyl)glycinamide + ADP + phosphate + H(+). It functions in the pathway purine metabolism; IMP biosynthesis via de novo pathway; N(2)-formyl-N(1)-(5-phospho-D-ribosyl)glycinamide from N(1)-(5-phospho-D-ribosyl)glycinamide (formate route): step 1/1. Functionally, involved in the de novo purine biosynthesis. Catalyzes the transfer of formate to 5-phospho-ribosyl-glycinamide (GAR), producing 5-phospho-ribosyl-N-formylglycinamide (FGAR). Formate is provided by PurU via hydrolysis of 10-formyl-tetrahydrofolate. The chain is Formate-dependent phosphoribosylglycinamide formyltransferase from Prochlorococcus marinus (strain MIT 9515).